The sequence spans 114 residues: T cell receptor alpha variable 10 (114 aa).

The first 21 residues, 1 to 21 (MKKHLTTFLVILWLYFYRGNG), serve as a signal peptide directing secretion. The region spanning 23–114 (NQVEQSPQSL…DSASYICVVS (92 aa)) is the Ig-like domain. Residues asparagine 39 and asparagine 45 are each glycosylated (N-linked (GlcNAc...) asparagine). Cysteines 44 and 111 form a disulfide.

Alpha-beta TR is a heterodimer composed of an alpha and beta chain; disulfide-linked. The alpha-beta TR is associated with the transmembrane signaling CD3 coreceptor proteins to form the TR-CD3 (TcR or TCR). The assembly of alpha-beta TR heterodimers with CD3 occurs in the endoplasmic reticulum where a single alpha-beta TR heterodimer associates with one CD3D-CD3E heterodimer, one CD3G-CD3E heterodimer and one CD247 homodimer forming a stable octameric structure. CD3D-CD3E and CD3G-CD3E heterodimers preferentially associate with TR alpha and TR beta chains, respectively. The association of the CD247 homodimer is the last step of TcR assembly in the endoplasmic reticulum and is required for transport to the cell surface.

It is found in the cell membrane. Its function is as follows. V region of the variable domain of T cell receptor (TR) alpha chain that participates in the antigen recognition. Alpha-beta T cell receptors are antigen specific receptors which are essential to the immune response and are present on the cell surface of T lymphocytes. Recognize peptide-major histocompatibility (MH) (pMH) complexes that are displayed by antigen presenting cells (APC), a prerequisite for efficient T cell adaptive immunity against pathogens. Binding of alpha-beta TR to pMH complex initiates TR-CD3 clustering on the cell surface and intracellular activation of LCK that phosphorylates the ITAM motifs of CD3G, CD3D, CD3E and CD247 enabling the recruitment of ZAP70. In turn ZAP70 phosphorylates LAT, which recruits numerous signaling molecules to form the LAT signalosome. The LAT signalosome propagates signal branching to three major signaling pathways, the calcium, the mitogen-activated protein kinase (MAPK) kinase and the nuclear factor NF-kappa-B (NF-kB) pathways, leading to the mobilization of transcription factors that are critical for gene expression and essential for T cell growth and differentiation. The T cell repertoire is generated in the thymus, by V-(D)-J rearrangement. This repertoire is then shaped by intrathymic selection events to generate a peripheral T cell pool of self-MH restricted, non-autoaggressive T cells. Post-thymic interaction of alpha-beta TR with the pMH complexes shapes TR structural and functional avidity. The protein is T cell receptor alpha variable 10 of Homo sapiens (Human).